A 367-amino-acid chain; its full sequence is tRNA/tmRNA (uracil-C(5))-methyltransferase (367 aa).

Residues Gln-191, Tyr-218, Asn-223, Glu-239, and Asp-299 each coordinate S-adenosyl-L-methionine. Cys-324 (nucleophile) is an active-site residue. The active-site Proton acceptor is Glu-358.

This sequence belongs to the class I-like SAM-binding methyltransferase superfamily. RNA M5U methyltransferase family. TrmA subfamily.

It catalyses the reaction uridine(54) in tRNA + S-adenosyl-L-methionine = 5-methyluridine(54) in tRNA + S-adenosyl-L-homocysteine + H(+). The enzyme catalyses uridine(341) in tmRNA + S-adenosyl-L-methionine = 5-methyluridine(341) in tmRNA + S-adenosyl-L-homocysteine + H(+). Its function is as follows. Dual-specificity methyltransferase that catalyzes the formation of 5-methyluridine at position 54 (m5U54) in all tRNAs, and that of position 341 (m5U341) in tmRNA (transfer-mRNA). This chain is tRNA/tmRNA (uracil-C(5))-methyltransferase, found in Campylobacter concisus (strain 13826).